Reading from the N-terminus, the 493-residue chain is Glutamyl-tRNA(Gln) amidotransferase subunit A (493 aa).

Active-site charge relay system residues include K79 and S159. The active-site Acyl-ester intermediate is the S183.

This sequence belongs to the amidase family. GatA subfamily. As to quaternary structure, heterotrimer of A, B and C subunits.

It carries out the reaction L-glutamyl-tRNA(Gln) + L-glutamine + ATP + H2O = L-glutaminyl-tRNA(Gln) + L-glutamate + ADP + phosphate + H(+). In terms of biological role, allows the formation of correctly charged Gln-tRNA(Gln) through the transamidation of misacylated Glu-tRNA(Gln) in organisms which lack glutaminyl-tRNA synthetase. The reaction takes place in the presence of glutamine and ATP through an activated gamma-phospho-Glu-tRNA(Gln). The chain is Glutamyl-tRNA(Gln) amidotransferase subunit A from Sinorhizobium fredii (strain NBRC 101917 / NGR234).